We begin with the raw amino-acid sequence, 175 residues long: Translation initiation factor IF-3 (175 aa).

The protein belongs to the IF-3 family. In terms of assembly, monomer.

The protein resides in the cytoplasm. Its function is as follows. IF-3 binds to the 30S ribosomal subunit and shifts the equilibrium between 70S ribosomes and their 50S and 30S subunits in favor of the free subunits, thus enhancing the availability of 30S subunits on which protein synthesis initiation begins. This Staphylococcus aureus (strain MRSA252) protein is Translation initiation factor IF-3.